Here is a 224-residue protein sequence, read N- to C-terminus: ATP synthase subunit b (224 aa).

Residues 2–22 form a helical membrane-spanning segment; the sequence is TPSLGLIFWQSVIFLISFIIL.

Belongs to the ATPase B chain family. In terms of assembly, F-type ATPases have 2 components, F(1) - the catalytic core - and F(0) - the membrane proton channel. F(1) has five subunits: alpha(3), beta(3), gamma(1), delta(1), epsilon(1). F(0) has three main subunits: a(1), b(2) and c(10-14). The alpha and beta chains form an alternating ring which encloses part of the gamma chain. F(1) is attached to F(0) by a central stalk formed by the gamma and epsilon chains, while a peripheral stalk is formed by the delta and b chains.

It localises to the cell membrane. Its function is as follows. F(1)F(0) ATP synthase produces ATP from ADP in the presence of a proton or sodium gradient. F-type ATPases consist of two structural domains, F(1) containing the extramembraneous catalytic core and F(0) containing the membrane proton channel, linked together by a central stalk and a peripheral stalk. During catalysis, ATP synthesis in the catalytic domain of F(1) is coupled via a rotary mechanism of the central stalk subunits to proton translocation. Functionally, component of the F(0) channel, it forms part of the peripheral stalk, linking F(1) to F(0). The polypeptide is ATP synthase subunit b (Karelsulcia muelleri (strain GWSS) (Sulcia muelleri)).